Here is a 247-residue protein sequence, read N- to C-terminus: ATP synthase subunit a, chloroplastic (247 aa).

The next 5 membrane-spanning stretches (helical) occupy residues 38-58 (QVLI…IIAV), 95-115 (VPFI…GALL), 134-154 (INTT…AGLS), 199-219 (LVVV…VMFL), and 220-240 (GLFT…AYIG).

It belongs to the ATPase A chain family. As to quaternary structure, F-type ATPases have 2 components, CF(1) - the catalytic core - and CF(0) - the membrane proton channel. CF(1) has five subunits: alpha(3), beta(3), gamma(1), delta(1), epsilon(1). CF(0) has four main subunits: a, b, b' and c.

It localises to the plastid. The protein resides in the chloroplast thylakoid membrane. Key component of the proton channel; it plays a direct role in the translocation of protons across the membrane. The polypeptide is ATP synthase subunit a, chloroplastic (Sorghum bicolor (Sorghum)).